We begin with the raw amino-acid sequence, 319 residues long: Cobalamin biosynthesis protein CbiB (319 aa).

Transmembrane regions (helical) follow at residues 56-76, 82-102, 153-173, 204-224, and 296-316; these read VMWI…LALA, WLGW…RSLA, VDGI…LAMA, VANY…AGLC, and LMWG…CWLS.

It belongs to the CobD/CbiB family.

The protein resides in the cell membrane. The protein operates within cofactor biosynthesis; adenosylcobalamin biosynthesis. Converts cobyric acid to cobinamide by the addition of aminopropanol on the F carboxylic group. However, the true cosubstrate could be (R)-1-amino-2-propanol O-2-phosphate, leading to cobinamide phosphate. This chain is Cobalamin biosynthesis protein CbiB, found in Salmonella arizonae (strain ATCC BAA-731 / CDC346-86 / RSK2980).